Reading from the N-terminus, the 1026-residue chain is Multidrug resistance protein MdtC (1026 aa).

11 helical membrane passes run 12–32 (VATTLLTLAIAISGVISFSLL), 333–353 (EVEQSLVIAIGLVILVVFIFL), 360–380 (LIPAVAVPVSLIGSFTAMYLC), 387–407 (LSLMALTIATGFVVDDAIVVL), 431–451 (VGFTVLSMSVSLVAVFIPLLL), 463–483 (FAVTLSVSIGLSLIISLTLTP), 528–548 (WVLAVFLATIALNVWLYVSIP), 853–873 (LLLIAAAIATVYIVLGILYES), 897–917 (LFGAPFSLIALIGIMLLIGIV), 953–973 (PIMMTTLAALFGALPLVLTHG), and 984–1004 (ITIVGGLIVSQLLTLYTTPVV).

It belongs to the resistance-nodulation-cell division (RND) (TC 2.A.6) family. MdtC subfamily. Part of a tripartite efflux system composed of MdtA, MdtB and MdtC. MdtC forms a heteromultimer with MdtB.

It is found in the cell inner membrane. This chain is Multidrug resistance protein MdtC, found in Serratia proteamaculans (strain 568).